The sequence spans 798 residues: Neuroligin-1 (798 aa).

The first 17 residues, 1–17, serve as a signal peptide directing secretion; sequence MERIYLLLLLFLPRIRS. Topologically, residues 18–685 are extracellular; that stretch reads YDVRSVTTSW…AAGSFTGKAL (668 aa). A disulfide bond links Cys-86 and Cys-125. N-linked (GlcNAc...) asparagine glycosylation is found at Asn-164, Asn-292, and Asn-315. A disulfide bridge connects residues Cys-288 and Cys-307. A disordered region spans residues 636–676; the sequence is ANLPFPPPPMPPSPPPELTTKPKPSESPTTLQTTTESEKAA. Pro residues predominate over residues 639 to 652; that stretch reads PFPPPPMPPSPPPE. Low complexity predominate over residues 653-665; it reads LTTKPKPSESPTT. A helical membrane pass occupies residues 686–706; the sequence is GGVIFIGCGFLIMNVCLLIAV. The Cytoplasmic portion of the chain corresponds to 707–798; that stretch reads RREWGKKRRN…QAPTLEEIQV (92 aa). The segment at 731-765 is disordered; sequence HGGGAEQYNSLNSPEPLLSASHKNSTSMRPAGISP.

It belongs to the type-B carboxylesterase/lipase family. In terms of assembly, interacts (via extracellular domain) with isoform b of madd-4; the interaction is required for the localization to postsynaptic domains. Interacts with unc-49.

It is found in the cell membrane. The protein resides in the synapse. In terms of biological role, probable neuronal cell surface protein thought to be involved in cell-cell-interactions by forming intercellular junctions through binding to beta-neurexins. Plays a role in the clustering of the GABA(A) receptor unc-49 at postsynaptic sites in neuromuscular junctions (NMJs) via the interaction with madd-4 and neurexin nrx-1 and is thereby required for normal GABAergic synaptic transmission. The chain is Neuroligin-1 (nlg-1) from Caenorhabditis elegans.